Here is a 191-residue protein sequence, read N- to C-terminus: Probable nicotinate-nucleotide adenylyltransferase (191 aa).

This sequence belongs to the NadD family.

It carries out the reaction nicotinate beta-D-ribonucleotide + ATP + H(+) = deamido-NAD(+) + diphosphate. It functions in the pathway cofactor biosynthesis; NAD(+) biosynthesis; deamido-NAD(+) from nicotinate D-ribonucleotide: step 1/1. Catalyzes the reversible adenylation of nicotinate mononucleotide (NaMN) to nicotinic acid adenine dinucleotide (NaAD). This chain is Probable nicotinate-nucleotide adenylyltransferase, found in Staphylococcus epidermidis (strain ATCC 12228 / FDA PCI 1200).